The primary structure comprises 2280 residues: Protein Ycf2 (2280 aa).

Gly-1634–Ser-1641 provides a ligand contact to ATP.

Belongs to the Ycf2 family.

The protein localises to the plastid. It is found in the chloroplast stroma. In terms of biological role, probable ATPase of unknown function. Its presence in a non-photosynthetic plant (Epifagus virginiana) and experiments in tobacco indicate that it has an essential function which is probably not related to photosynthesis. The chain is Protein Ycf2 from Eucalyptus globulus subsp. globulus (Tasmanian blue gum).